The sequence spans 413 residues: Hibernation-specific plasma protein HP-55 (413 aa).

The first 24 residues, 1 to 24, serve as a signal peptide directing secretion; it reads MPSSISWGLLLLAALSCLGPGSLA. Q25 bears the Pyrrolidone carboxylic acid mark. N-linked (GlcNAc...) asparagine glycosylation is found at N65, N102, N165, and N266. An RCL region spans residues 368-387; sequence GGTVLGAEAMLQAPIMKFDR.

It belongs to the serpin family. As to quaternary structure, plasma proteins HP-20, HP-25, HP-27 and HP-55 form a 140 kDa complex via disulfide bonds in the plasma. Post-translationally, the N-terminus is blocked. In terms of tissue distribution, plasma; synthesized in the liver.

The protein localises to the secreted. Protease inhibitor. This Tamias sibiricus (Siberian chipmunk) protein is Hibernation-specific plasma protein HP-55.